The primary structure comprises 537 residues: Apoptosis inhibitor 5-like protein API5 (537 aa).

The ARM-like and Heat-like helical repeats stretch occupies residues 9–363; sequence AEVERLYELG…TTNSLCGYKI (355 aa). The interval 465–537 is disordered; that stretch reads WMEQPKKPAP…GGRGRGWGYR (73 aa). The segment covering 474–492 has biased composition (polar residues); the sequence is PTTTGGKRSQPATNGNTPA.

This sequence belongs to the API5 family. As to quaternary structure, interacts with AIP1 and AIP2.

Its subcellular location is the nucleus. Putative anti-apoptotic factor involved in the regulation of tapetal programmed cell death (PCD) and degeneration during anther development. Interacts directly with the DEAD-box ATP-dependent RNA helicases AIP1 and AIP2 that form dimers and bind the promoter region of the cysteine protease CP1 involved in tapetum PCD. The chain is Apoptosis inhibitor 5-like protein API5 from Oryza sativa subsp. japonica (Rice).